A 69-amino-acid polypeptide reads, in one-letter code: UPF0337 protein RB0906 (69 aa).

Belongs to the UPF0337 (CsbD) family.

The sequence is that of UPF0337 protein RB0906 from Rhizobium meliloti (strain 1021) (Ensifer meliloti).